The following is a 172-amino-acid chain: Disulfide bond formation protein B (172 aa).

The Cytoplasmic portion of the chain corresponds to 1 to 13 (MIIRLAGMSVRQG). A helical membrane pass occupies residues 14–30 (CLLGLLMCALMMGVALV). The Periplasmic portion of the chain corresponds to 31–48 (LQYVYGLTPCPLCIGQRI). Cys-40 and Cys-43 are oxidised to a cystine. The helical transmembrane segment at 49–65 (AVLLAAFVFAIGALHNP) threads the bilayer. Over 66-72 (AGNLGRG) the chain is Cytoplasmic. The chain crosses the membrane as a helical span at residues 73–90 (LYAGLAALASVLGLAVAA). Topologically, residues 91–147 (RHVWLQSLPPENVPSCGPGLDYMMEVLPLWDVLSRVLAGSGECAEIHGSLLGMSIPQ) are periplasmic. A disulfide bridge links Cys-106 with Cys-133. Residues 148-166 (WTLLGFAVLLLIPLGMLAG) traverse the membrane as a helical segment. The Cytoplasmic portion of the chain corresponds to 167 to 172 (IVIRRR).

It belongs to the DsbB family.

The protein localises to the cell inner membrane. Functionally, required for disulfide bond formation in some periplasmic proteins. Acts by oxidizing the DsbA protein. The chain is Disulfide bond formation protein B from Chromohalobacter salexigens (strain ATCC BAA-138 / DSM 3043 / CIP 106854 / NCIMB 13768 / 1H11).